The sequence spans 303 residues: Beta-lactamase L2 (303 aa).

Residues 1-35 (MLARRRFLQFSGAAVASSLALPLLARAAGKTAASA) constitute a signal peptide (tat-type signal). The active-site Acyl-ester intermediate is the serine 83. Residue 247-249 (KTG) participates in substrate binding.

It belongs to the class-A beta-lactamase family. Post-translationally, predicted to be exported by the Tat system. The position of the signal peptide cleavage has not been experimentally proven.

The catalysed reaction is a beta-lactam + H2O = a substituted beta-amino acid. The chain is Beta-lactamase L2 from Stenotrophomonas maltophilia (Pseudomonas maltophilia).